We begin with the raw amino-acid sequence, 733 residues long: Centrosomal protein of 68 kDa (733 aa).

A compositionally biased stretch (basic and acidic residues) spans 71 to 80 (SKEPVADRSK). Disordered regions lie at residues 71-92 (SKEP…SASV), 150-207 (GLSQ…SFAN), and 222-244 (VVGA…DATG). Positions 178–190 (SSRSISASSVGSS) are enriched in low complexity. The span at 231-241 (GSAQPLTSGSD) shows a compositional bias: polar residues. Position 315 is a phosphoserine (S315). The tract at residues 420–442 (PQLKTKEKEPPFPRQKRGRQHVS) is disordered. 2 positions are modified to phosphoserine: S453 and S459. Positions 497 to 571 (HSSLQVSDSD…KPLKTQPASK (75 aa)) are disordered. The segment covering 540–569 (IQPQDSRGKSSLMSNQTLGVSSKPLKTQPA) has biased composition (polar residues).

In terms of assembly, interacts with CNTLN; the interaction recruits CEP68 to the centrosome. Interacts with the SCF(FBXW11) complex which contains SKP1, CUL1 and FBXW11; the interaction is probably mediated by FBXW11 and the complex also contains CDK5RAP2 and PCNT. Also interacts with F-box protein BTRC. Interacts with serine/threonine-protein kinase PLK1; the interaction leads to phosphorylation of CEP68 and its subsequent degradation. Interacts with NEK2; the interaction leads to phosphorylation of CEP68. Phosphorylation by PLK1 is required for binding to BTRC in prometaphase. Phosphorylated directly or indirectly by NEK2. NEK2-mediated phosphorylation promotes CEP68 dissociation from the centrosome and its degradation at the onset of mitosis. Post-translationally, ubiquitinated and targeted for proteasomal degradation in early mitosis by the SCF(BTRC) and/or SCF(FBXW11) E3 ubiquitin-protein ligase complexes. Degradation is complete by prometaphase and is required for removal of CDK5RAP2 from the peripheral pericentriolar material and subsequent centriole separation.

It is found in the cytoplasm. Its subcellular location is the cytoskeleton. It localises to the microtubule organizing center. The protein localises to the centrosome. Functionally, involved in maintenance of centrosome cohesion, probably as part of a linker structure which prevents centrosome splitting. Required for localization of CDK5RAP2 to the centrosome during interphase. Contributes to CROCC/rootletin filament formation. The sequence is that of Centrosomal protein of 68 kDa (Cep68) from Mus musculus (Mouse).